The following is a 749-amino-acid chain: Activating signal cointegrator 1 complex subunit 2 (749 aa).

The interval 1–26 (MPALPLDQLQITHKDPKTGQPKTSAA) is disordered. At T233 the chain carries Phosphothreonine. Residues 465–508 (ELDSLISQVKDLLPDLGEGFILACLEHYSYDSEQVINNILEDRL) enclose the CUE domain. Disordered regions lie at residues 606–675 (EDEY…QDPA) and 689–749 (LARK…MIPS). Phosphoserine is present on S625. Acidic residues predominate over residues 649–662 (VQEEEWDEEDEVEE). Basic and acidic residues-rich tracts occupy residues 663-675 (EAPK…QDPA) and 711-726 (QSRE…EANK).

This sequence belongs to the ASCC2 family. Identified in the ASCC complex that contains ASCC1, ASCC2 and ASCC3. Interacts directly with ASCC3. The ASCC complex interacts with ALKBH3. Interacts (via CUE domain) with 'Lys-63'-linked polyubiquitin chains, but not with 'Lys-48'-linked polyubiquitin chains. Part of the ASC-1 complex, that contains TRIP4, ASCC1, ASCC2 and ASCC3. Component of the RQT (ribosome quality control trigger) complex, that contains ASCC2, ASCC3 and TRIP4. Interacts with CSRP1. Interacts with PRPF8, a component of the spliceosome. Interacts with ZCCHC4.

The protein localises to the nucleus. The protein resides in the nucleus speckle. Ubiquitin-binding protein involved in DNA repair and rescue of stalled ribosomes. Plays a role in DNA damage repair as component of the ASCC complex. Recruits ASCC3 and ALKBH3 to sites of DNA damage by binding to polyubiquitinated proteins that have 'Lys-63'-linked polyubiquitin chains. Part of the ASC-1 complex that enhances NF-kappa-B, SRF and AP1 transactivation. Involved in activation of the ribosome quality control (RQC) pathway, a pathway that degrades nascent peptide chains during problematic translation. Specifically recognizes and binds RPS20/uS10 ubiquitinated by ZNF598, promoting recruitment of the RQT (ribosome quality control trigger) complex on stalled ribosomes, followed by disassembly of stalled ribosomes. In Mus musculus (Mouse), this protein is Activating signal cointegrator 1 complex subunit 2 (Ascc2).